The following is a 118-amino-acid chain: Large ribosomal subunit protein bL19 (118 aa).

The protein belongs to the bacterial ribosomal protein bL19 family.

Functionally, this protein is located at the 30S-50S ribosomal subunit interface and may play a role in the structure and function of the aminoacyl-tRNA binding site. The protein is Large ribosomal subunit protein bL19 of Campylobacter concisus (strain 13826).